The chain runs to 260 residues: Protein FAM220A (260 aa).

2 disordered regions span residues 1–75 (MKAG…SKAS) and 129–158 (GSDW…GRPG). Polar residues predominate over residues 35 to 47 (RNPSPSVVPSWTD).

In terms of assembly, interacts with transcriptional activator STAT3; the interaction occurs in both the nucleus and the cytoplasm, is enhanced by IL6 and promotes STAT3 dephosphorylation, leading to negative regulation of STAT3 transcriptional activator activity. Can interact with both unphosphorylated and phosphorylated STAT3 but interacts preferentially with phosphorylated STAT3 in the nucleus. Interacts with protein phosphatase PTPN2/TC45; this promotes interaction of PTPN2 with STAT3, leading to dephosphorylation of STAT3 by PTPN2. As to expression, expressed at high levels in the testis where it is detected within elongated spermatids during the late stages (steps 9-16) of haploid germ cell development and in the tubular lumen (at protein level).

It is found in the nucleus. The protein localises to the cytoplasm. Its subcellular location is the cytoplasmic vesicle. The protein resides in the secretory vesicle. It localises to the acrosome. Promotes dephosphorylation of transcriptional activator STAT3 by interacting with both STAT3 and protein phosphatase PTPN2. This promotes interaction of PTPN2 with STAT3 and mediates STAT3 dephosphorylation by PTPN2, leading to negative regulation of STAT3 transcriptional activator activity. May be required for spermiogenesis or sperm function. This Mus musculus (Mouse) protein is Protein FAM220A.